Here is a 310-residue protein sequence, read N- to C-terminus: Ninja-family protein 3 (310 aa).

3 disordered regions span residues 1 to 29 (MASR…GEPD), 68 to 140 (SLPG…DDAQ), and 156 to 215 (DQGN…EQPP). A compositionally biased stretch (basic and acidic residues) spans 99-108 (ERWRRREMQS). Composition is skewed to polar residues over residues 156-166 (DQGNASSSMPE) and 176-193 (KSTS…QNKS).

The protein belongs to the Ninja family.

It is found in the nucleus. The chain is Ninja-family protein 3 (AFP-D1) from Triticum aestivum (Wheat).